The primary structure comprises 184 residues: Peptide deformylase (184 aa).

Cys99 and His141 together coordinate Fe cation. The active site involves Glu142. His145 lines the Fe cation pocket.

The protein belongs to the polypeptide deformylase family. Fe(2+) is required as a cofactor.

The enzyme catalyses N-terminal N-formyl-L-methionyl-[peptide] + H2O = N-terminal L-methionyl-[peptide] + formate. Removes the formyl group from the N-terminal Met of newly synthesized proteins. Requires at least a dipeptide for an efficient rate of reaction. N-terminal L-methionine is a prerequisite for activity but the enzyme has broad specificity at other positions. This Chlamydia abortus (strain DSM 27085 / S26/3) (Chlamydophila abortus) protein is Peptide deformylase.